The following is a 134-amino-acid chain: Holo-[acyl-carrier-protein] synthase (134 aa).

Residues Asp-8 and Glu-57 each coordinate Mg(2+).

This sequence belongs to the P-Pant transferase superfamily. AcpS family. It depends on Mg(2+) as a cofactor.

It localises to the cytoplasm. It catalyses the reaction apo-[ACP] + CoA = holo-[ACP] + adenosine 3',5'-bisphosphate + H(+). In terms of biological role, transfers the 4'-phosphopantetheine moiety from coenzyme A to a Ser of acyl-carrier-protein. The sequence is that of Holo-[acyl-carrier-protein] synthase from Rhizobium rhizogenes (strain K84 / ATCC BAA-868) (Agrobacterium radiobacter).